Consider the following 750-residue polypeptide: NAD(P)H-quinone oxidoreductase subunit 5, chloroplastic (750 aa).

Helical transmembrane passes span 9-29 (WIIP…LLLF), 40-60 (WAFT…NLSI), 89-109 (IDPL…MVLI), 125-145 (FAYM…SNLI), 147-167 (IYIF…FWFT), 185-205 (GDFG…SFEF), 230-250 (AALL…HIWL), 258-278 (TPIS…FLVA), 283-303 (LFIV…ITVL), 327-347 (LGYM…FHLI), 354-374 (ALLF…VGYS), 396-416 (TSFL…CFWS), 425-445 (WLYS…TAFY), 548-568 (LFPL…GIPF), 607-627 (IFSV…YKPI), and 724-744 (LFFY…FYLF).

It belongs to the complex I subunit 5 family. In terms of assembly, NDH is composed of at least 16 different subunits, 5 of which are encoded in the nucleus.

The protein resides in the plastid. It is found in the chloroplast thylakoid membrane. The enzyme catalyses a plastoquinone + NADH + (n+1) H(+)(in) = a plastoquinol + NAD(+) + n H(+)(out). It catalyses the reaction a plastoquinone + NADPH + (n+1) H(+)(in) = a plastoquinol + NADP(+) + n H(+)(out). NDH shuttles electrons from NAD(P)H:plastoquinone, via FMN and iron-sulfur (Fe-S) centers, to quinones in the photosynthetic chain and possibly in a chloroplast respiratory chain. The immediate electron acceptor for the enzyme in this species is believed to be plastoquinone. Couples the redox reaction to proton translocation, and thus conserves the redox energy in a proton gradient. This Tecoma stans (Yellow bells) protein is NAD(P)H-quinone oxidoreductase subunit 5, chloroplastic (ndhF).